The sequence spans 438 residues: High-affinity gluconate transporter (438 aa).

Helical transmembrane passes span 2 to 22 (PLVI…RFKM), 23 to 43 (NGFI…GMPL), 52 to 72 (AGVG…AMLG), 108 to 128 (VGFA…VFTI), 134 to 154 (IPLL…HGFL), 174 to 194 (TLLY…PVYA), 222 to 242 (FGVS…RAIA), 258 to 278 (FLGD…FTFG), 292 to 312 (LVSS…GGAF), 327 to 347 (SMMH…AAVL), 349 to 369 (IALG…APLI), 370 to 390 (ATTG…SVIF), and 418 to 438 (MLET…NMVI).

This sequence belongs to the GntP permease family.

The protein resides in the cell inner membrane. It participates in carbohydrate acid metabolism; D-gluconate degradation. Functionally, part of the gluconate utilization system Gnt-I; high-affinity intake of gluconate. This chain is High-affinity gluconate transporter (gntT), found in Escherichia coli (strain K12).